We begin with the raw amino-acid sequence, 663 residues long: Guanine nucleotide exchange factor subunit RGP1 (663 aa).

A phosphoserine mark is found at Ser351, Ser354, Ser357, Ser363, Ser364, and Ser370. Residues 412-443 are disordered; it reads GKDEDSSDPEPNDSHFSNEMVTSAESSLRSDA. Residues 426-440 are compositionally biased toward polar residues; it reads HFSNEMVTSAESSLR.

The protein belongs to the RGP1 family. As to quaternary structure, forms a complex with RIC1.

It is found in the golgi apparatus. Its function is as follows. The RIC1-RGP1 complex acts as a guanine nucleotide exchange factor (GEF), which activates YPT6 by exchanging bound GDP for free GTP. It is thereby required for efficient fusion of endosome-derived vesicles with the Golgi. The RIC1-RGP1 participates in the recycling of SNC1, presumably by mediating fusion of endosomal vesicles with the Golgi compartment. Required for proper mitotic growth. This Saccharomyces cerevisiae (strain ATCC 204508 / S288c) (Baker's yeast) protein is Guanine nucleotide exchange factor subunit RGP1.